A 539-amino-acid chain; its full sequence is Lysosomal cobalamin transport escort protein LMBD1 (539 aa).

Over 1–7 (MATGSTE) the chain is Extracellular. A helical transmembrane segment spans residues 8 to 28 (LLIGWCIFGVLLLAILAFCWV). Over 29 to 47 (YVRKYQSHQESEVISTITA) the chain is Cytoplasmic. Residues 48-68 (ISSLAIALITSALLPVDIFLV) traverse the membrane as a helical segment. At 69 to 98 (SFMKNHNGTFKDWAESNTTRLQIENTVLIG) the chain is on the extracellular side. Residues asparagine 75 and asparagine 85 are each glycosylated (N-linked (GlcNAc...) asparagine). The chain crosses the membrane as a helical span at residues 99–119 (YYTLYSIILFCVFLWIPFVYF). Residues 120-142 (YYEEKDDTDGSQCSQIANAFKYT) lie on the Cytoplasmic side of the membrane. A helical membrane pass occupies residues 143–163 (SGFILVCSCLLLIGAFAPLDI). Over 164-186 (HTNKNSTDLDKIKLLFLELGSSN) the chain is Extracellular. Residue asparagine 168 is glycosylated (N-linked (GlcNAc...) asparagine). A helical transmembrane segment spans residues 187–207 (GLAALSFSISSLTLIGMLAAI). The Cytoplasmic segment spans residues 208-303 (TYTAYGMSAL…KCCIVIRPFK (96 aa)). The chain crosses the membrane as a helical span at residues 304 to 324 (IIWGILFILVALLFIVSLFLS). Residues 325-362 (NLDKALHSAGIDSGFIIFGTNLTNPLNMLLPVLQTVFP) lie on the Extracellular side of the membrane. N-linked (GlcNAc...) asparagine glycosylation occurs at asparagine 345. The chain crosses the membrane as a helical span at residues 363–383 (LDYIFITIITMYFIFTSMAGI). Over 384 to 406 (RNMGIWFFWIRLYKIRRRRTRPQ) the chain is Cytoplasmic. A helical transmembrane segment spans residues 407–427 (ALLFLCMILLLIVLHTSYMIY). Topologically, residues 428 to 484 (SLAPQYVMYGSQKYLWENNSTQETAIGNSSASVLKDCDASAPEDQCTVTRTYLFLHK) are extracellular. Residues asparagine 445, asparagine 446, and asparagine 455 are each glycosylated (N-linked (GlcNAc...) asparagine). Residues 485 to 505 (FWFFSSIYYFGNWAFIVVFVI) form a helical membrane-spanning segment. Residues 506-539 (GLIVSCCKGKKSVIEGEVEDDDSDLSDDEEHPYA) lie on the Cytoplasmic side of the membrane.

This sequence belongs to the LIMR family. LMBRD1 subfamily.

It localises to the endoplasmic reticulum membrane. Its subcellular location is the lysosome membrane. The protein localises to the cell membrane. Lysosomal membrane chaperone required to export cobalamin (vitamin B12) from the lysosome to the cytosol, allowing its conversion to cofactors. Targets ABCD4 transporter from the endoplasmic reticulum to the lysosome. Then forms a complex with lysosomal ABCD4 and cytoplasmic MMACHC to transport cobalamin across the lysosomal membrane. May play a role in mediating and regulating the internalization of the insulin receptor. The polypeptide is Lysosomal cobalamin transport escort protein LMBD1 (lmbrd1) (Xenopus tropicalis (Western clawed frog)).